The chain runs to 248 residues: ATP synthase subunit a, chloroplastic (248 aa).

5 consecutive transmembrane segments (helical) span residues glycine 35–glycine 55, isoleucine 94–isoleucine 114, isoleucine 133–serine 153, valine 202–alanine 222, and serine 224–glycine 244.

Belongs to the ATPase A chain family. In terms of assembly, F-type ATPases have 2 components, CF(1) - the catalytic core - and CF(0) - the membrane proton channel. CF(1) has five subunits: alpha(3), beta(3), gamma(1), delta(1), epsilon(1). CF(0) has four main subunits: a, b, b' and c.

It is found in the plastid. Its subcellular location is the chloroplast thylakoid membrane. In terms of biological role, key component of the proton channel; it plays a direct role in the translocation of protons across the membrane. The chain is ATP synthase subunit a, chloroplastic from Antithamnion sp. (Red alga).